Here is a 393-residue protein sequence, read N- to C-terminus: 2-methylcitrate synthase (393 aa).

Substrate contacts are provided by arginine 92 and histidine 207. Residue histidine 242 is part of the active site. Lysine 275–phenylalanine 279 lines the CoA pocket. The active site involves histidine 281. Residue arginine 290 coordinates substrate. The active site involves aspartate 332. Substrate-binding residues include arginine 357 and arginine 376.

This sequence belongs to the citrate synthase family. In terms of assembly, homodimer.

It catalyses the reaction propanoyl-CoA + oxaloacetate + H2O = (2S,3S)-2-methylcitrate + CoA + H(+). The enzyme catalyses oxaloacetate + acetyl-CoA + H2O = citrate + CoA + H(+). Its pathway is organic acid metabolism; propanoate degradation. The protein operates within carbohydrate metabolism; tricarboxylic acid cycle; isocitrate from oxaloacetate: step 1/2. Functionally, involved in the catabolism of short chain fatty acids (SCFA) via the tricarboxylic acid (TCA)(acetyl degradation route) and via the 2-methylcitrate cycle I (propionate degradation route). Catalyzes the Claisen condensation of propionyl-CoA and oxaloacetate (OAA) to yield 2-methylcitrate (2-MC) and CoA. Also catalyzes the condensation of oxaloacetate with acetyl-CoA. This is 2-methylcitrate synthase (gltA1) from Mycobacterium tuberculosis (strain ATCC 35801 / TMC 107 / Erdman).